Here is a 141-residue protein sequence, read N- to C-terminus: ATP synthase epsilon chain (141 aa).

It belongs to the ATPase epsilon chain family. F-type ATPases have 2 components, CF(1) - the catalytic core - and CF(0) - the membrane proton channel. CF(1) has five subunits: alpha(3), beta(3), gamma(1), delta(1), epsilon(1). CF(0) has three main subunits: a, b and c.

Its subcellular location is the cell inner membrane. Its function is as follows. Produces ATP from ADP in the presence of a proton gradient across the membrane. This is ATP synthase epsilon chain from Pseudomonas savastanoi pv. phaseolicola (strain 1448A / Race 6) (Pseudomonas syringae pv. phaseolicola (strain 1448A / Race 6)).